Consider the following 172-residue polypeptide: Cold-inducible RNA-binding protein (172 aa).

The RRM domain occupies 6–84; that stretch reads GKLFVGGLSF…RQIRVDQAGK (79 aa). Positions 70–172 are disordered; it reads KSVDGRQIRV…SYDSYATHNE (103 aa). Gly residues-rich tracts occupy residues 93–105 and 114–137; these read YRGG…GFFR and FSRG…GYGG. A phosphoserine mark is found at serine 130, serine 138, serine 146, serine 156, serine 159, and serine 163. Over residues 138–172 the composition is skewed to low complexity; sequence SRDYYASRSQGGSYGYRSSGGSYRDSYDSYATHNE.

As to quaternary structure, interacts with EIF4G1. Associates with ribosomes. Methylated on arginine residues. Methylation of the RGG motifs is a prerequisite for recruitment into SGs. Post-translationally, phosphorylated by CK2, GSK3A and GSK3B. Phosphorylation by GSK3B increases RNA-binding activity to the TXN 3'-UTR transcript upon exposure to UV radiation. Ubiquitous.

It localises to the nucleus. It is found in the nucleoplasm. The protein resides in the cytoplasm. Cold-inducible mRNA binding protein that plays a protective role in the genotoxic stress response by stabilizing transcripts of genes involved in cell survival. Promotes assembly of stress granules (SGs), when overexpressed. Seems to play an essential role in cold-induced suppression of cell proliferation. Acts as a translational repressor. Acts as a translational activator. Binds specifically to the 3'-untranslated regions (3'-UTRs) of stress-responsive transcripts RPA2 and TXN. The protein is Cold-inducible RNA-binding protein (Cirbp) of Mus musculus (Mouse).